Reading from the N-terminus, the 389-residue chain is S-adenosylmethionine synthase (389 aa).

Histidine 15 contacts ATP. A Mg(2+)-binding site is contributed by aspartate 17. Glutamate 43 contacts K(+). Glutamate 56 and glutamine 99 together coordinate L-methionine. A flexible loop region spans residues 99–109; it reads QSPDIAQGVNE. ATP-binding positions include 166–168, 234–235, aspartate 243, 249–250, alanine 266, and lysine 270; these read DAK, RF, and RK. Position 243 (aspartate 243) interacts with L-methionine. An L-methionine-binding site is contributed by lysine 274.

It belongs to the AdoMet synthase family. In terms of assembly, homotetramer; dimer of dimers. Mg(2+) serves as cofactor. The cofactor is K(+).

The protein resides in the cytoplasm. The catalysed reaction is L-methionine + ATP + H2O = S-adenosyl-L-methionine + phosphate + diphosphate. It participates in amino-acid biosynthesis; S-adenosyl-L-methionine biosynthesis; S-adenosyl-L-methionine from L-methionine: step 1/1. In terms of biological role, catalyzes the formation of S-adenosylmethionine (AdoMet) from methionine and ATP. The overall synthetic reaction is composed of two sequential steps, AdoMet formation and the subsequent tripolyphosphate hydrolysis which occurs prior to release of AdoMet from the enzyme. The chain is S-adenosylmethionine synthase from Neisseria meningitidis serogroup C / serotype 2a (strain ATCC 700532 / DSM 15464 / FAM18).